The sequence spans 134 residues: Translation initiation factor 2 subunit beta (134 aa).

A compositionally biased stretch (basic and acidic residues) spans 1–12 (MEYDDMLDRAME). Residues 1–28 (MEYDDMLDRAMEETPEIDGTSERFEVPD) form a disordered region.

Belongs to the eIF-2-beta/eIF-5 family. Heterotrimer composed of an alpha, a beta and a gamma chain.

Functionally, eIF-2 functions in the early steps of protein synthesis by forming a ternary complex with GTP and initiator tRNA. This Haloarcula marismortui (strain ATCC 43049 / DSM 3752 / JCM 8966 / VKM B-1809) (Halobacterium marismortui) protein is Translation initiation factor 2 subunit beta.